The chain runs to 151 residues: Deoxyuridine 5'-triphosphate nucleotidohydrolase (151 aa).

Substrate is bound by residues 70–72, N83, 87–89, and M97; these read RSG and LID.

It belongs to the dUTPase family. The cofactor is Mg(2+).

The enzyme catalyses dUTP + H2O = dUMP + diphosphate + H(+). The protein operates within pyrimidine metabolism; dUMP biosynthesis; dUMP from dCTP (dUTP route): step 2/2. In terms of biological role, this enzyme is involved in nucleotide metabolism: it produces dUMP, the immediate precursor of thymidine nucleotides and it decreases the intracellular concentration of dUTP so that uracil cannot be incorporated into DNA. In Actinobacillus pleuropneumoniae serotype 5b (strain L20), this protein is Deoxyuridine 5'-triphosphate nucleotidohydrolase.